A 505-amino-acid chain; its full sequence is Olfactomedin-4 (505 aa).

Positions 1-18 (MSYSLLFLLALQFCLGSA) are cleaved as a signal peptide. Residues N64 and N128 are each glycosylated (N-linked (GlcNAc...) asparagine). Positions 174 to 225 (HIIDMLEVEIRNMTLLVEKLESLDQNNVLSIRRQILALKTKLKECEASKSDL) form a coiled coil. The region spanning 237–499 (SCSHGGVVNI…LLNYDLVFLQ (263 aa)) is the Olfactomedin-like domain. Residues C238 and C429 are joined by a disulfide bond.

Homomultimer; disulfide-linked. Interacts with NDUFA13. Interacts with cell surface lectins (locutions ricinus communis agglutinin I, concanavalin A and wheat germ agglutinin) and cadherin. In terms of processing, N-glycosylated.

The protein localises to the secreted. Its subcellular location is the extracellular space. The protein resides in the mitochondrion. Its function is as follows. May promote proliferation of pancreatic cancer cells by favoring the transition from the S to G2/M phase. In myeloid leukemic cell lines, inhibits cell growth and induces cell differentiation and apoptosis. May play a role in the inhibition of EIF4EBP1 phosphorylation/deactivation. Facilitates cell adhesion, most probably through interaction with cell surface lectins and cadherin. In Mus musculus (Mouse), this protein is Olfactomedin-4 (Olfm4).